A 204-amino-acid polypeptide reads, in one-letter code: LexA repressor (204 aa).

Residues 30–50 constitute a DNA-binding region (H-T-H motif); it reads IREICQGVGLSSPSTVHHHLK. Residues Ser125 and Lys162 each act as for autocatalytic cleavage activity in the active site.

The protein belongs to the peptidase S24 family. In terms of assembly, homodimer.

The enzyme catalyses Hydrolysis of Ala-|-Gly bond in repressor LexA.. Its function is as follows. Represses a number of genes involved in the response to DNA damage (SOS response), including recA and lexA. In the presence of single-stranded DNA, RecA interacts with LexA causing an autocatalytic cleavage which disrupts the DNA-binding part of LexA, leading to derepression of the SOS regulon and eventually DNA repair. The chain is LexA repressor from Carboxydothermus hydrogenoformans (strain ATCC BAA-161 / DSM 6008 / Z-2901).